A 285-amino-acid polypeptide reads, in one-letter code: Polyamine aminopropyltransferase (285 aa).

Residues 2 to 237 (DLWFSESHTP…GYWCFGFASK (236 aa)) enclose the PABS domain. Gln31 serves as a coordination point for S-methyl-5'-thioadenosine. Asp86 lines the spermidine pocket. S-methyl-5'-thioadenosine-binding positions include Glu106 and 137–138 (DG). The active-site Proton acceptor is the Asp155.

This sequence belongs to the spermidine/spermine synthase family. Homodimer or homotetramer.

Its subcellular location is the cytoplasm. It catalyses the reaction S-adenosyl 3-(methylsulfanyl)propylamine + putrescine = S-methyl-5'-thioadenosine + spermidine + H(+). Its pathway is amine and polyamine biosynthesis; spermidine biosynthesis; spermidine from putrescine: step 1/1. In terms of biological role, catalyzes the irreversible transfer of a propylamine group from the amino donor S-adenosylmethioninamine (decarboxy-AdoMet) to putrescine (1,4-diaminobutane) to yield spermidine. The protein is Polyamine aminopropyltransferase of Streptococcus uberis (strain ATCC BAA-854 / 0140J).